The following is a 517-amino-acid chain: Crotonobetaine/carnitine--CoA ligase (517 aa).

Belongs to the ATP-dependent AMP-binding enzyme family.

The catalysed reaction is 4-(trimethylamino)butanoate + ATP + CoA = 4-(trimethylamino)butanoyl-CoA + AMP + diphosphate. It carries out the reaction crotonobetaine + ATP + CoA = crotonobetainyl-CoA + AMP + diphosphate. The enzyme catalyses (R)-carnitine + ATP + CoA = (R)-carnitinyl-CoA + AMP + diphosphate. Its pathway is amine and polyamine metabolism; carnitine metabolism. Functionally, catalyzes the transfer of CoA to carnitine, generating the initial carnitinyl-CoA needed for the CaiB reaction cycle. Also has activity toward crotonobetaine and gamma-butyrobetaine. The polypeptide is Crotonobetaine/carnitine--CoA ligase (Escherichia coli (strain ATCC 8739 / DSM 1576 / NBRC 3972 / NCIMB 8545 / WDCM 00012 / Crooks)).